The primary structure comprises 264 residues: Apolipoprotein A-I (264 aa).

An N-terminal signal peptide occupies residues 1-18 (MKAVVLTVAVFFLTGSQA). 2 repeat units span residues 67–88 (LKLLDNWDSLSSTVSKLREQIG) and 89–110 (PVTQEFWDKLEKDTVSLRQEMN). The segment at 67–264 (LKLLDNWDSL…DEATKKLTTQ (198 aa)) is 10 X approximate tandem repeats. Methionine 109 is subject to Methionine sulfoxide. One copy of the 3; half-length repeat lies at 111–121 (KDLEEVKLKVQ). A run of 3 repeats spans residues 122 to 143 (PYLDEFQKRWQEDVERYRQQVE), 144 to 165 (PLGTELREGARQKLQELHEKLS), and 166 to 187 (PLGQELRDRARAHVDALRTHLA). A 7; truncated repeat occupies 188-207 (PYSDELRQRLAARLEALKES). Copy 8 of the repeat occupies 208 to 229 (SSLADYQAKATEHLSALGEKAK). Residues 230–240 (PALEDLRQGLL) form a 9; half-length repeat. Residues 241–264 (PVLENLKMSFWSAVDEATKKLTTQ) form repeat 10.

This sequence belongs to the apolipoprotein A1/A4/E family. As to quaternary structure, homodimer. Interacts with APOA1BP and CLU. Component of a sperm activating protein complex (SPAP), consisting of APOA1, an immunoglobulin heavy chain, an immunoglobulin light chain and albumin. Interacts with NDRG1. Interacts with SCGB3A2. Interacts with NAXE and YJEFN3. Glycosylated. Post-translationally, palmitoylated. In terms of processing, phosphorylation sites are present in the extracellular medium.

It is found in the secreted. In terms of biological role, participates in the reverse transport of cholesterol from tissues to the liver for excretion by promoting cholesterol efflux from tissues and by acting as a cofactor for the lecithin cholesterol acyltransferase (LCAT). As part of the SPAP complex, activates spermatozoa motility. In Marmota monax (Woodchuck), this protein is Apolipoprotein A-I (ApoA1).